A 248-amino-acid chain; its full sequence is MIDENKQVNHTSQQLGESTEVKQAIMSESPAQINNNESTNEVTESVAIPTNVVGDTTATEDNGFTATQIQEANTAALAELTQQINSLKTQLDERSTQYMRIAADFENYRKRTQKEKEELDLQVKRNTILELLPIVDNFERARSHLKPQTESEMTIHKSYQGVYKQLVDSLKRLGVSPMRPEGQEFDPNLHEAVMREPTDEHPEGTVLEELVRGYYLGDRVLRHSMVKVAAPKEDTLPAQENQSSPADS.

The disordered stretch occupies residues 229 to 248 (AAPKEDTLPAQENQSSPADS). Over residues 238-248 (AQENQSSPADS) the composition is skewed to polar residues.

Belongs to the GrpE family. Homodimer.

Its subcellular location is the cytoplasm. Its function is as follows. Participates actively in the response to hyperosmotic and heat shock by preventing the aggregation of stress-denatured proteins, in association with DnaK and GrpE. It is the nucleotide exchange factor for DnaK and may function as a thermosensor. Unfolded proteins bind initially to DnaJ; upon interaction with the DnaJ-bound protein, DnaK hydrolyzes its bound ATP, resulting in the formation of a stable complex. GrpE releases ADP from DnaK; ATP binding to DnaK triggers the release of the substrate protein, thus completing the reaction cycle. Several rounds of ATP-dependent interactions between DnaJ, DnaK and GrpE are required for fully efficient folding. This Trichormus variabilis (strain ATCC 29413 / PCC 7937) (Anabaena variabilis) protein is Protein GrpE.